The sequence spans 70 residues: DNA-directed RNA polymerase subunit epsilon (70 aa).

Belongs to the RNA polymerase subunit epsilon family. In terms of assembly, RNAP is composed of a core of 2 alpha, a beta and a beta' subunit. The core is associated with a delta subunit, and at least one of epsilon or omega. When a sigma factor is associated with the core the holoenzyme is formed, which can initiate transcription.

The catalysed reaction is RNA(n) + a ribonucleoside 5'-triphosphate = RNA(n+1) + diphosphate. In terms of biological role, a non-essential component of RNA polymerase (RNAP). This Lacticaseibacillus casei (strain BL23) (Lactobacillus casei) protein is DNA-directed RNA polymerase subunit epsilon.